The sequence spans 672 residues: Iron-phytosiderophore transporter YSL15 (672 aa).

Over residues 1–11 (MEHADADRTRV) the composition is skewed to basic and acidic residues. The segment at 1 to 27 (MEHADADRTRVAPEIGSLHDEDAEADP) is disordered. The next 14 membrane-spanning stretches (helical) occupy residues 47 to 67 (GVVAAALIGFVFSVIVMKIAL), 70 to 90 (GLVPTLNISAALLAFLALRGW), 115 to 135 (CAVACYTIAFGGGFGSTLLGL), 158 to 178 (GIGWMVGLLLAISFAGNLSLI), 218 to 238 (LHGFLKYFGLSLFWSFFQWFY), 279 to 299 (LVNLSTLLGAVISWGIMWPLI), 325 to 345 (FLCIALIMGDGLYHFVKVTGV), 390 to 410 (MAYSGYFLLSIIAVITIPIMF), 418 to 438 (VIIAYALGPVLGFANSYGAGL), 450 to 470 (IALFVFAAWAGKDNGVIAGLV), 504 to 524 (VGELIGTGIGCFIAPLTFMLF), 556 to 576 (ISALPKHCLSLSVGFFAFAVL), 602 to 622 (FLVGASFAIDMCVGSLVLFAW), and 630 to 650 (AAFMVPAVASGLMCGDGIWTF).

It belongs to the YSL (TC 2.A.67.2) family. Expressed in root phloem and at low levels in the shoot companion cells.

It localises to the cell membrane. In terms of biological role, involved in Fe(3+) uptake from the rhizosphere and phloem transport of iron. Plays an important role in iron homeostasis during the early stages of growth. Transports Fe(3+)-phytosiderophore, but not Fe(3+)- or Fe(2+)-nicotianamine. May not transport other chelated metals. In Oryza sativa subsp. japonica (Rice), this protein is Iron-phytosiderophore transporter YSL15 (YSL15).